Here is a 1974-residue protein sequence, read N- to C-terminus: Protein Ycf2 (1974 aa).

A disordered region spans residues 219-246; the sequence is SQLKGSSYQSRDHLDSISNEDSEYHNQR. 1308–1315 is an ATP binding site; it reads GSIGTGRS.

The protein belongs to the Ycf2 family.

The protein localises to the plastid. The protein resides in the chloroplast stroma. Probable ATPase of unknown function. Its presence in a non-photosynthetic plant (Epifagus virginiana) and experiments in tobacco indicate that it has an essential function which is probably not related to photosynthesis. This is Protein Ycf2 from Jasminum nudiflorum (Winter jasmine).